The following is a 289-amino-acid chain: Energy-coupling factor transporter ATP-binding protein EcfA2 (289 aa).

An ABC transporter domain is found at 3-246 (IQAKKLNYTY…PEWLKNHHLN (244 aa)). 40–47 (GHTGSGKS) is an ATP binding site.

This sequence belongs to the ABC transporter superfamily. Energy-coupling factor EcfA family. In terms of assembly, forms a stable energy-coupling factor (ECF) transporter complex composed of 2 membrane-embedded substrate-binding proteins (S component), 2 ATP-binding proteins (A component) and 2 transmembrane proteins (T component).

Its subcellular location is the cell membrane. Its function is as follows. ATP-binding (A) component of a common energy-coupling factor (ECF) ABC-transporter complex. Unlike classic ABC transporters this ECF transporter provides the energy necessary to transport a number of different substrates. The polypeptide is Energy-coupling factor transporter ATP-binding protein EcfA2 (Ligilactobacillus salivarius (strain UCC118) (Lactobacillus salivarius)).